The primary structure comprises 302 residues: ATP synthase gamma chain (302 aa).

It belongs to the ATPase gamma chain family. As to quaternary structure, F-type ATPases have 2 components, CF(1) - the catalytic core - and CF(0) - the membrane proton channel. CF(1) has five subunits: alpha(3), beta(3), gamma(1), delta(1), epsilon(1). CF(0) has three main subunits: a, b and c.

It localises to the cell membrane. Its function is as follows. Produces ATP from ADP in the presence of a proton gradient across the membrane. The gamma chain is believed to be important in regulating ATPase activity and the flow of protons through the CF(0) complex. The protein is ATP synthase gamma chain of Enterococcus faecalis (strain ATCC 700802 / V583).